A 117-amino-acid polypeptide reads, in one-letter code: Pancreatic progenitor cell differentiation and proliferation factor A (117 aa).

Positions 22–46 (GSTSSNSSCSSSEYTGEVIPHPPGL) are disordered. Residues 23–33 (STSSNSSCSSS) show a composition bias toward low complexity.

It belongs to the PPDPF family. As to expression, expressed exclusively in the exocrine cells during pancreas development.

Its function is as follows. Probable regulator of exocrine pancreas development. The polypeptide is Pancreatic progenitor cell differentiation and proliferation factor A (ppdpfa) (Danio rerio (Zebrafish)).